Reading from the N-terminus, the 417-residue chain is Signal recognition particle receptor FtsY (417 aa).

Residues 228–235 (GINGTGKT), 310–314 (DTAGR), and 368–371 (TKID) contribute to the GTP site.

This sequence belongs to the GTP-binding SRP family. FtsY subfamily. As to quaternary structure, part of the signal recognition particle protein translocation system, which is composed of SRP and FtsY.

The protein localises to the cell membrane. Its subcellular location is the cytoplasm. The enzyme catalyses GTP + H2O = GDP + phosphate + H(+). In terms of biological role, involved in targeting and insertion of nascent membrane proteins into the cytoplasmic membrane. Acts as a receptor for the complex formed by the signal recognition particle (SRP) and the ribosome-nascent chain (RNC). The polypeptide is Signal recognition particle receptor FtsY (Methanosarcina acetivorans (strain ATCC 35395 / DSM 2834 / JCM 12185 / C2A)).